The sequence spans 355 residues: Peptide chain release factor 1 (355 aa).

Position 231 is an N5-methylglutamine (Q231). Positions 281-291 are enriched in basic and acidic residues; the sequence is ERLAKESEARK. The interval 281 to 302 is disordered; that stretch reads ERLAKESEARKSQVGSGDRSER.

Belongs to the prokaryotic/mitochondrial release factor family. In terms of processing, methylated by PrmC. Methylation increases the termination efficiency of RF1.

The protein localises to the cytoplasm. Functionally, peptide chain release factor 1 directs the termination of translation in response to the peptide chain termination codons UAG and UAA. This Campylobacter jejuni subsp. doylei (strain ATCC BAA-1458 / RM4099 / 269.97) protein is Peptide chain release factor 1.